The sequence spans 131 residues: Norrin (131 aa).

The first 24 residues, 1–24 (MRNHVLAASISMLSLLAIMGDTDS), serve as a signal peptide directing secretion. 4 cysteine pairs are disulfide-bonded: cysteine 37–cysteine 94, cysteine 53–cysteine 108, cysteine 63–cysteine 124, and cysteine 67–cysteine 126. Positions 37–130 (CMRHHYVDSI…ILSCHCEECS (94 aa)) constitute a CTCK domain.

As to quaternary structure, homodimer; disulfide-linked. Component of a complex, at least composed of TSPAN12, FZD4, LRP5/6 and norrin (NDP). Binds FZD4 with high affinity. Interacts with LRP6 (via Beta-propellers 1 and 2). As to expression, expressed in the outer nuclear, inner nuclear and ganglion cell layers of the retina.

It localises to the secreted. In terms of biological role, activates the canonical Wnt signaling pathway through FZD4 and LRP5 coreceptor. Plays a central role in retinal vascularization by acting as a ligand for FZD4 that signals via stabilizing beta-catenin (CTNNB1) and activating LEF/TCF-mediated transcriptional programs. Acts in concert with TSPAN12 to activate FZD4 independently of the Wnt-dependent activation of FZD4, suggesting the existence of a Wnt-independent signaling that also promote accumulation the beta-catenin (CTNNB1). May be involved in a pathway that regulates neural cell differentiation and proliferation. Possible role in neuroectodermal cell-cell interaction. The polypeptide is Norrin (Ndp) (Mus musculus (Mouse)).